The chain runs to 682 residues: Protein PilJ (682 aa).

Residues 1–14 lie on the Cytoplasmic side of the membrane; that stretch reads MKKINAGNLFAGMR. The chain crosses the membrane as a helical span at residues 15–38; sequence SSSVIAGLFIVLIVSIVLLFANFA. Residues 39–306 are Periplasmic-facing; that stretch reads YLNTQSNHDK…DGFENLAGGR (268 aa). Residues 307-333 form a helical membrane-spanning segment; sequence SINLFAGYALGALALASIILIGLVMVR. Over 334-682 the chain is Cytoplasmic; sequence ETNRRLAETA…FKLPEGVEQA (349 aa). The 52-residue stretch at 347–398 folds into the HAMP domain; sequence DRNQAAILRLLDEIADLADGDLTVAATVTEDFTGAIADSINYSIDQLRELVE. Residues 403 to 639 enclose the Methyl-accepting transducer domain; sequence TAVQVAAAAQ…HISNTMNVIQ (237 aa).

The protein belongs to the methyl-accepting chemotaxis (MCP) protein family.

It is found in the cell inner membrane. Functionally, may be a part of a signal-transduction system that regulates twitching motility by controlling pilus function (extension and retraction). In Pseudomonas aeruginosa (strain ATCC 15692 / DSM 22644 / CIP 104116 / JCM 14847 / LMG 12228 / 1C / PRS 101 / PAO1), this protein is Protein PilJ (pilJ).